A 287-amino-acid polypeptide reads, in one-letter code: 2' cyclic ADP-D-ribose synthase BtTIR (287 aa).

The region spanning 155–287 (KQYDFFISHA…DDIVENLKNL (133 aa)) is the TIR domain. The active site involves E230.

Homodimer.

The enzyme catalyses NAD(+) = 2'cADPR + nicotinamide + H(+). In terms of biological role, NAD(+) hydrolase (NADase) that cleaves NAD(+) into nicotinamide and 2' cyclic ADP-D-ribose (2'cADPR). The polypeptide is 2' cyclic ADP-D-ribose synthase BtTIR (Bacteroides thetaiotaomicron).